The primary structure comprises 301 residues: Retinochrome (301 aa).

Over 1–17 (MFGNPAMTGLHQFTMWE) the chain is Extracellular. Residues 18 to 43 (HYFTGSIYLVLGCVVFSLCGMCIIFL) form a helical membrane-spanning segment. At 44-54 (ARQSPKPRRKY) the chain is on the cytoplasmic side. The helical transmembrane segment at 55-76 (AILIHVLITAMAVNGGDPAHAS) threads the bilayer. The Extracellular segment spans residues 77-94 (SSIVGRWLYGSVGCQLMG). The helical transmembrane segment at 95–120 (FWGFFGGMSHIWMLFAFAMERYMAVC) threads the bilayer. Topologically, residues 121 to 132 (HREFYQQMPSVY) are cytoplasmic. The helical transmembrane segment at 133–153 (YSIIVGLMYTFGTFWATMPLL) threads the bilayer. The Extracellular segment spans residues 154 to 180 (GWASYGLEVHGTSCTINYSVSDESYQS). A glycan (N-linked (GlcNAc...) asparagine) is linked at Asn170. A helical transmembrane segment spans residues 181–208 (YVFFLAIFSFIFPMVSGWYAISKAWSGL). Residues 209 to 230 (SAIPDAEKEKDKDILSEEQLTA) lie on the Cytoplasmic side of the membrane. The helical transmembrane segment at 231-255 (LAGAFILISLISWSGFGYVAIYSAL) threads the bilayer. Over 256 to 264 (THGGAQLSH) the chain is Extracellular. A helical transmembrane segment spans residues 265–289 (LRGHVPPIMSKTGCALFPLLIFLLT). Residue Lys275 is modified to N6-(retinylidene)lysine. The Cytoplasmic segment spans residues 290–301 (ARSLPKSDTKKP).

Belongs to the G-protein coupled receptor 1 family. Opsin subfamily. In terms of tissue distribution, mainly stored in myeloid bodies of the inner segments.

The protein resides in the membrane. Its function is as follows. Retinochrome is capable of acting as an effective catalyst in the light to convert various isomers of retinal into 11-cis, the form that is required by opsin to resynthesize rhodopsin. This is Retinochrome from Todarodes pacificus (Japanese flying squid).